Reading from the N-terminus, the 104-residue chain is Large ribosomal subunit protein bL21 (104 aa).

Belongs to the bacterial ribosomal protein bL21 family. As to quaternary structure, part of the 50S ribosomal subunit. Contacts protein L20.

Functionally, this protein binds to 23S rRNA in the presence of protein L20. This chain is Large ribosomal subunit protein bL21, found in Azobacteroides pseudotrichonymphae genomovar. CFP2.